Reading from the N-terminus, the 271-residue chain is 3-methyl-2-oxobutanoate hydroxymethyltransferase 1 (271 aa).

Mg(2+)-binding residues include Asp53 and Asp92. 3-methyl-2-oxobutanoate-binding positions include 53–54 (DS), Asp92, and Lys120. A Mg(2+)-binding site is contributed by Glu122. The active-site Proton acceptor is Glu189.

The protein belongs to the PanB family. As to quaternary structure, homodecamer; pentamer of dimers. Requires Mg(2+) as cofactor.

The protein resides in the cytoplasm. The enzyme catalyses 3-methyl-2-oxobutanoate + (6R)-5,10-methylene-5,6,7,8-tetrahydrofolate + H2O = 2-dehydropantoate + (6S)-5,6,7,8-tetrahydrofolate. It functions in the pathway cofactor biosynthesis; (R)-pantothenate biosynthesis; (R)-pantoate from 3-methyl-2-oxobutanoate: step 1/2. Its function is as follows. Catalyzes the reversible reaction in which hydroxymethyl group from 5,10-methylenetetrahydrofolate is transferred onto alpha-ketoisovalerate to form ketopantoate. The chain is 3-methyl-2-oxobutanoate hydroxymethyltransferase 1 from Burkholderia cenocepacia (strain HI2424).